The following is a 78-amino-acid chain: Defensin-like protein 308 (78 aa).

The first 19 residues, methionine 1–serine 19, serve as a signal peptide directing secretion. 3 cysteine pairs are disulfide-bonded: cysteine 31–cysteine 50, cysteine 37–cysteine 55, and cysteine 41–cysteine 57.

It belongs to the DEFL family.

Its subcellular location is the secreted. This Arabidopsis thaliana (Mouse-ear cress) protein is Defensin-like protein 308.